The primary structure comprises 358 residues: Testis-specific serine/threonine-protein kinase 2 (358 aa).

The region spanning 12–272 (YIVGINLGKG…IDEILSHSWL (261 aa)) is the Protein kinase domain. Residues 18 to 26 (LGKGSYAKV) and K41 each bind ATP. The Proton acceptor role is filled by D136. 2 stretches are compositionally biased toward basic and acidic residues: residues 296-315 (DCKL…DHKL) and 329-358 (NEDR…KAST). The interval 296–358 (DCKLDTRPGS…SGAEVEKAST (63 aa)) is disordered.

This sequence belongs to the protein kinase superfamily. CAMK Ser/Thr protein kinase family. As to quaternary structure, interacts with TSSK1B. Interacts with HSP90; this interaction stabilizes TSSK2. It depends on Mg(2+) as a cofactor. Post-translationally, autophosphorylated. In terms of processing, ubiquitinated; HSP90 activity negatively regulates ubiquitination and degradation. As to expression, testis-specific. Expressed only in the spermatids postmeiotically at the final stages of cytodifferentiation in the seminiferous tubules (at protein level). Not detected in released sperms in the lumen of the seminiferous tubules. Also present in the epididymal sperm (at protein level).

It is found in the cytoplasm. Its subcellular location is the cytoskeleton. The protein resides in the microtubule organizing center. The protein localises to the centrosome. It localises to the centriole. It is found in the cytoplasmic vesicle. Its subcellular location is the secretory vesicle. The protein resides in the acrosome. It catalyses the reaction L-seryl-[protein] + ATP = O-phospho-L-seryl-[protein] + ADP + H(+). The enzyme catalyses L-threonyl-[protein] + ATP = O-phospho-L-threonyl-[protein] + ADP + H(+). Activated by phosphorylation on Thr-174, potentially by autophosphorylation. Testis-specific serine/threonine-protein kinase required during spermatid development. Phosphorylates 'Ser-281' of TSKS and SPAG16. Involved in the late stages of spermatogenesis, during the reconstruction of the cytoplasm. During spermatogenesis, required for the transformation of a ring-shaped structure around the base of the flagellum originating from the chromatoid body. In Mus musculus (Mouse), this protein is Testis-specific serine/threonine-protein kinase 2 (Tssk2).